A 568-amino-acid chain; its full sequence is Protein yellow (568 aa).

Residues 1–28 (MHAQDKGGILPALSLLLIAVAMVSPSQA) form the signal peptide. 2 N-linked (GlcNAc...) asparagine glycosylation sites follow: Asn151 and Asn222.

Belongs to the major royal jelly protein family.

The protein localises to the secreted. In terms of biological role, controls the pigmentation pattern of the adult cuticle and larval mouth parts. This Drosophila madeirensis (Fruit fly) protein is Protein yellow (y).